The sequence spans 356 residues: Protein-arginine kinase (356 aa).

In terms of domain architecture, Phosphagen kinase C-terminal spans 22-249; sequence FRPISTLSLS…SKILSAETEA (228 aa). ATP is bound by residues 25-29, 172-176, and 202-207; these read ISTLS, VARAF, and SSLLPL.

This sequence belongs to the ATP:guanido phosphotransferase family.

It carries out the reaction L-arginyl-[protein] + ATP = N(omega)-phospho-L-arginyl-[protein] + ADP + H(+). Catalyzes the specific phosphorylation of arginine residues in proteins. The polypeptide is Protein-arginine kinase (Chlamydia muridarum (strain MoPn / Nigg)).